Reading from the N-terminus, the 84-residue chain is Magnetosome protein MamR (84 aa).

The protein belongs to the magnetosome MamR family.

The protein localises to the magnetosome. Its function is as follows. May play a role in controlling magnetite number and size. Coexpression of mamLQRBIEMO in a deletion of the 17 gene mamAB operon restores magnetosome vesicle formation but not magnetite biosynthesis. The chain is Magnetosome protein MamR from Magnetospirillum gryphiswaldense (strain DSM 6361 / JCM 21280 / NBRC 15271 / MSR-1).